We begin with the raw amino-acid sequence, 543 residues long: CTP synthase (543 aa).

Positions 1-265 are amidoligase domain; it reads MTNYIFVTGG…DELVVQRFGL (265 aa). Residue Ser-13 participates in CTP binding. Ser-13 provides a ligand contact to UTP. ATP is bound by residues 14–19 and Asp-71; that span reads SLGKGI. Positions 71 and 139 each coordinate Mg(2+). Residues 146–148, 186–191, and Lys-222 contribute to the CTP site; these read DIE and KTKPTQ. UTP-binding positions include 186–191 and Lys-222; that span reads KTKPTQ. 238 to 240 contacts ATP; the sequence is KDA. A Glutamine amidotransferase type-1 domain is found at 290-541; the sequence is TIGMVGKYVE…VKAAGEYYKN (252 aa). Gly-351 provides a ligand contact to L-glutamine. Cys-378 functions as the Nucleophile; for glutamine hydrolysis in the catalytic mechanism. L-glutamine is bound by residues 379–382, Glu-402, and Arg-469; that span reads LGMQ. Active-site residues include His-514 and Glu-516.

The protein belongs to the CTP synthase family. Homotetramer.

The enzyme catalyses UTP + L-glutamine + ATP + H2O = CTP + L-glutamate + ADP + phosphate + 2 H(+). It carries out the reaction L-glutamine + H2O = L-glutamate + NH4(+). The catalysed reaction is UTP + NH4(+) + ATP = CTP + ADP + phosphate + 2 H(+). It functions in the pathway pyrimidine metabolism; CTP biosynthesis via de novo pathway; CTP from UDP: step 2/2. Its activity is regulated as follows. Allosterically activated by GTP, when glutamine is the substrate; GTP has no effect on the reaction when ammonia is the substrate. The allosteric effector GTP functions by stabilizing the protein conformation that binds the tetrahedral intermediate(s) formed during glutamine hydrolysis. Inhibited by the product CTP, via allosteric rather than competitive inhibition. Catalyzes the ATP-dependent amination of UTP to CTP with either L-glutamine or ammonia as the source of nitrogen. Regulates intracellular CTP levels through interactions with the four ribonucleotide triphosphates. This chain is CTP synthase, found in Pseudoalteromonas atlantica (strain T6c / ATCC BAA-1087).